The chain runs to 127 residues: Small ribosomal subunit protein uS13 (127 aa).

Positions Gly-95–Val-118 are enriched in basic residues. Positions Gly-95–Lys-127 are disordered.

This sequence belongs to the universal ribosomal protein uS13 family. Part of the 30S ribosomal subunit. Forms a loose heterodimer with protein S19. Forms two bridges to the 50S subunit in the 70S ribosome.

Functionally, located at the top of the head of the 30S subunit, it contacts several helices of the 16S rRNA. In the 70S ribosome it contacts the 23S rRNA (bridge B1a) and protein L5 of the 50S subunit (bridge B1b), connecting the 2 subunits; these bridges are implicated in subunit movement. Contacts the tRNAs in the A and P-sites. In Anaeromyxobacter sp. (strain Fw109-5), this protein is Small ribosomal subunit protein uS13.